The primary structure comprises 137 residues: Small ribosomal subunit protein uS12 (137 aa).

The disordered stretch occupies residues 1–57; it reads MPTINQLVRKPRKSKVEKSKSPALNVGYNSHKKVQTNVSSPQKRGVATRVGTMTPKK. Aspartate 102 bears the 3-methylthioaspartic acid mark.

The protein belongs to the universal ribosomal protein uS12 family. As to quaternary structure, part of the 30S ribosomal subunit. Contacts proteins S8 and S17. May interact with IF1 in the 30S initiation complex.

In terms of biological role, with S4 and S5 plays an important role in translational accuracy. Functionally, interacts with and stabilizes bases of the 16S rRNA that are involved in tRNA selection in the A site and with the mRNA backbone. Located at the interface of the 30S and 50S subunits, it traverses the body of the 30S subunit contacting proteins on the other side and probably holding the rRNA structure together. The combined cluster of proteins S8, S12 and S17 appears to hold together the shoulder and platform of the 30S subunit. In Streptococcus sanguinis (strain SK36), this protein is Small ribosomal subunit protein uS12.